The sequence spans 92 residues: uncharacterized protein (92 aa).

Positions Met-1 to Thr-10 are enriched in basic and acidic residues. A disordered region spans residues Met-1–Asp-21. The CHCH domain maps to Thr-16–Lys-66. Short sequence motifs (cx9C motif) lie at residues Cys-19 to Cys-29 and Cys-48 to Cys-58. Cystine bridges form between Cys-19–Cys-58 and Cys-29–Cys-48.

This sequence belongs to the TRIAP1/MDM35 family.

This is an uncharacterized protein from Arabidopsis thaliana (Mouse-ear cress).